A 134-amino-acid polypeptide reads, in one-letter code: NADH-quinone oxidoreductase subunit A 1 (134 aa).

The next 3 membrane-spanning stretches (helical) occupy residues 10–30, 65–85, and 94–114; these read LIPLAIYTLFAVGLIGILLLA, FYLIAIFFIVFDVEGAFILAW, and IPGLVHITLFITVLLLGLVWL.

It belongs to the complex I subunit 3 family. NDH-1 is composed of 14 different subunits. Subunits NuoA, H, J, K, L, M, N constitute the membrane sector of the complex.

The protein resides in the cell inner membrane. The enzyme catalyses a quinone + NADH + 5 H(+)(in) = a quinol + NAD(+) + 4 H(+)(out). Functionally, NDH-1 shuttles electrons from NADH, via FMN and iron-sulfur (Fe-S) centers, to quinones in the respiratory chain. The immediate electron acceptor for the enzyme in this species is believed to be ubiquinone. Couples the redox reaction to proton translocation (for every two electrons transferred, four hydrogen ions are translocated across the cytoplasmic membrane), and thus conserves the redox energy in a proton gradient. The chain is NADH-quinone oxidoreductase subunit A 1 from Citrifermentans bemidjiense (strain ATCC BAA-1014 / DSM 16622 / JCM 12645 / Bem) (Geobacter bemidjiensis).